Here is a 768-residue protein sequence, read N- to C-terminus: MSTPENPDPVDTTTQDAAAAIVAEEGTPPSESLRDEYEQLADLVRKYRYAYYQEDSPTVSDAEFDELYRRLEELEALHPELVSNDSPTQEVGGEVSSAFAAVEHLQRMYSLDDVFSLDELEAWVRKAEASVAKLGDSVPPIAWLTELKIDGLAVNLLYRDGKLVRAATRGDGTTGEDITHNVLTIKEIPRQLSGSGYPSEVEIRGEVFIPSKAFLEFNESLVAAGKAPLANPRNAAAGSLRQKDPAETAKRPLSMFVHGIGAREGLDAKSQSESYKLLEEWGLPVSPYLKVLETFDDVLKFIADYGERRHKLVHEIDGIVVKIDDFATQRALGYTSRVPRWAAAYKYPPEEVHTKLLDIAVNVGRTGRVTPFGLMEPVKVAGSTVGMATLHNQDVVKAKGVMIGDIVILRKAGDVIPEIVGPVLALRDKQEPPVREFVMPTECPSCGTPLAPAKESDVDIRCPNAKSCPSQLRERVFHVASRGAFDIEALGWEAAVALTQPAEPETPPLTSEARLFSLTREDLADVLIRREKRSKGVGTGEYELVPYFYTKGTAKSPSKPTATTEKLFAELEKAKQQPLWRVLVALSIRHVGPTASRALATAFGSMDAIRNATEEQMAHVDGVGPTIAVALKEWFAVDWHNEIVDSWAAAGVRMEDERDASVPRTLEGLTVVVTGTLPNFSRDEAKEAIIIRGGKASGSVSKNTSYLVAGESAGTKLDKAEQLGVPVLDEDGFRELLANGPAQTGTEAEAATDEATVVDETAAEAATE.

Residues Asp-61–Asp-65, Ser-110–Leu-111, and Glu-146 each bind NAD(+). Lys-148 serves as the catalytic N6-AMP-lysine intermediate. NAD(+) is bound by residues Arg-169, Glu-206, Lys-322, and Lys-346. Zn(2+) is bound by residues Cys-443, Cys-446, Cys-462, and Cys-468. Positions Ser-661–Ala-750 constitute a BRCT domain. The interval Asn-739–Glu-768 is disordered. The span at Thr-746–Glu-768 shows a compositional bias: low complexity.

Belongs to the NAD-dependent DNA ligase family. LigA subfamily. Mg(2+) serves as cofactor. Requires Mn(2+) as cofactor.

The catalysed reaction is NAD(+) + (deoxyribonucleotide)n-3'-hydroxyl + 5'-phospho-(deoxyribonucleotide)m = (deoxyribonucleotide)n+m + AMP + beta-nicotinamide D-nucleotide.. Its function is as follows. DNA ligase that catalyzes the formation of phosphodiester linkages between 5'-phosphoryl and 3'-hydroxyl groups in double-stranded DNA using NAD as a coenzyme and as the energy source for the reaction. It is essential for DNA replication and repair of damaged DNA. This is DNA ligase from Paenarthrobacter aurescens (strain TC1).